Here is a 1036-residue protein sequence, read N- to C-terminus: Lethal(2) giant larvae protein homolog 1 (1036 aa).

WD repeat units follow at residues 38-71, 78-119, 139-175, 199-233, 239-271, 289-331, 339-373, 395-473, 517-592, and 601-662; these read SALAFDPELRIMAIGTRSGAVKIYGAPGVEFTGL, VTQM…GLSF, VTVVLLVAGNTAALGTESGSIFFLDVATLALLEGQTL, SLQGHLQDPSKILIGYSRGLLVIWSQATQSVDNVF, LESLCWGRDGSSIISSHSDGSYAIWSTDTGSPP, AINK…ETLV, VIDFFTVHSTQPEDECDNPQALAVLLEEELVVLDL, TCSA…YKLS, QKVA…RMLI, and TAVT…LRQS. Residue S662 is modified to Phosphoserine. Over residues 667–677 the composition is skewed to basic residues; the sequence is RKSRVSGKKRT. Residues 667-688 are disordered; sequence RKSRVSGKKRTPAASSKLQEAN. The span at 679–688 shows a compositional bias: polar residues; the sequence is AASSKLQEAN. WD repeat units follow at residues 722 to 782, 791 to 843, 848 to 901, and 915 to 938; these read VRCL…KEVQ, AIAV…VSAK, LTAH…VHYS, and VFTRHGQGFYLISPSEFERFSLSA. At T957 the chain carries Phosphothreonine. 3 positions are modified to phosphoserine: S964, S982, and S989. Residues 980–1002 form a disordered region; sequence PESCEGSPSSAHSKRADTMEPPE.

The protein belongs to the WD repeat L(2)GL family. Associated with nonmuscle myosin II heavy chain. Interacts with PRKCI/aPKC, PARD6B/Par-6 and PARD6A. Interacts with STX4A. Interacts with RAB10 (GDP-bound form); the interaction is direct and promotes RAB10 association with membranes and activation through competition with the Rab inhibitor GDI1. Interacts with DCAF1. Phosphorylated by PRKCI on at least one of the following Ser residues: Ser 654, Ser-658, Ser-662, Ser-669 and Ser-672. Phosphorylation is important for appropriated cell polarization.

The protein resides in the early endosome membrane. It is found in the golgi apparatus. It localises to the trans-Golgi network membrane. Its subcellular location is the golgi apparatus membrane. The protein localises to the cell projection. The protein resides in the axon. It is found in the cytoplasm. It localises to the cytoskeleton. Its function is as follows. Cortical cytoskeleton protein found in a complex involved in maintaining cell polarity and epithelial integrity. Involved in the regulation of mitotic spindle orientation, proliferation, differentiation and tissue organization of neuroepithelial cells. Involved in axonogenesis through RAB10 activation thereby regulating vesicular membrane trafficking toward the axonal plasma membrane. The sequence is that of Lethal(2) giant larvae protein homolog 1 (Llgl1) from Mus musculus (Mouse).